Here is a 113-residue protein sequence, read N- to C-terminus: U11-theraphotoxin-Hhn1f (113 aa).

A signal peptide spans 1–21 (MNTVRVTFLLVFVLAVSLGQA). The propeptide occupies 22-74 (DKDENRMEMQEKTEQGKSYLDFAENLLLQKLEELEAKLLEEDSKESRNSRQKR). The disordered stretch occupies residues 61 to 82 (EEDSKESRNSRQKRCIGEGVPC). 3 disulfides stabilise this stretch: C75–C90, C82–C95, and C89–C110.

This sequence belongs to the neurotoxin 14 (magi-1) family. 01 (HNTX-16) subfamily. In terms of tissue distribution, expressed by the venom gland.

It is found in the secreted. Probable ion channel inhibitor. The chain is U11-theraphotoxin-Hhn1f from Cyriopagopus hainanus (Chinese bird spider).